Consider the following 361-residue polypeptide: Porphobilinogen deaminase (361 aa).

Cys-265 carries the S-(dipyrrolylmethanemethyl)cysteine modification. The disordered stretch occupies residues Leu-341 to Ser-361.

It belongs to the HMBS family. The cofactor is dipyrromethane.

It catalyses the reaction 4 porphobilinogen + H2O = hydroxymethylbilane + 4 NH4(+). Its pathway is porphyrin-containing compound metabolism; protoporphyrin-IX biosynthesis; coproporphyrinogen-III from 5-aminolevulinate: step 2/4. Its function is as follows. Tetrapolymerization of the monopyrrole PBG into the hydroxymethylbilane pre-uroporphyrinogen in several discrete steps. The sequence is that of Porphobilinogen deaminase (HEM3) from Debaryomyces hansenii (strain ATCC 36239 / CBS 767 / BCRC 21394 / JCM 1990 / NBRC 0083 / IGC 2968) (Yeast).